Consider the following 246-residue polypeptide: Cold-regulated protein 27 (246 aa).

Disordered regions lie at residues 1 to 39 and 151 to 232; these read MVGDYRGRFSSRRFSDDSDDSSDDASSVEGETTSSMYSA and EPEN…VVPL. Over residues 168–180 the composition is skewed to low complexity; that stretch reads SSGSASSLKQLSS.

The protein localises to the nucleus. In terms of biological role, together with COR28, involved in central circadian clock regulation and in flowering promotion, by binding to the chromatin of clock-associated evening genes TOC1, PRR5, ELF4 and cold-responsive genes in order to repress their transcription. Negative regulator of freezing tolerance. In Arabidopsis thaliana (Mouse-ear cress), this protein is Cold-regulated protein 27.